The sequence spans 92 residues: Small ribosomal subunit protein uS19c (92 aa).

This sequence belongs to the universal ribosomal protein uS19 family.

The protein resides in the plastid. It localises to the chloroplast. In terms of biological role, protein S19 forms a complex with S13 that binds strongly to the 16S ribosomal RNA. The polypeptide is Small ribosomal subunit protein uS19c (Lemna minor (Common duckweed)).